An 820-amino-acid chain; its full sequence is DNA replication helicase (820 aa).

Residue 90 to 97 participates in ATP binding; that stretch reads GTAGAGKT.

This sequence belongs to the herpesviridae helicase family. In terms of assembly, associates with the primase and the primase-associated factor to form the helicase-primase complex.

The protein resides in the host nucleus. In terms of biological role, component of the helicase/primase complex. Unwinds the DNA at the replication forks and generates single-stranded DNA for both leading and lagging strand synthesis. The primase synthesizes short RNA primers on the lagging strand that the polymerase elongates using dNTPs. Possesses helicase-like motifs and therefore may act as the helicase subunit of the complex. In Human herpesvirus 7 (strain JI) (HHV-7), this protein is DNA replication helicase.